The primary structure comprises 900 residues: MSDYKKTLSMPNTNFEMKANLSVKETKIQENWVLEKIEKKILAKNKSNTPFIIADGPPYANGDLHTGHALNKILKDIILRFKASVGFYTKYIPGWDTHGLPIEQEMAKRGLNKNANQTITEKRKNCKNFAIENVYKQRDQFRRLGILSEMDEIYVTCDLDYVIRQIKIFNKMLSKGLIYQDLKPVYWSWSSQTALADAEIIYQDVESDSIYVSLEILDKNEFVSKGDKVIIWTTTPWTLPSNLAIAANPKVTYCRVQVENSVYVISKNLVEKLAETLEWTNYEILSEFSGKKLENLPYKSPISDKKCKIIVDGYVSDSDGTGLVHNAPGFGHEDYLACKKYNIKPYCPIDNLGKFTGEVNDKELAGLFYKDANPIIIERLAKKKLLLKASKFTHSAAHDWRTKKPVIYRATKQWFVNIDKISKEIVAALNKVKSIDNTIIKKIKEMVLNRQEWCISRQRIWGVPICIIYDKDYNPILDPKLLNNIVDILNDEGINAWYNEDAKYFLTDSYNTSKKYIKETDIMDVWFDSGTSYSVLQADKLGYPADLYFEGKDQFRGWFNSSLITSVAAFKKSPYKELLTHGFVLDENGNKMSKSLGNIIDPLQVCKEYGADVLRLWVASVDFSKDVSISKDIIAQNAELYRRIRNTLFRFILGNLNGFNLKKLRGAKYSEADLYVLSCLSNDIKTIKACYDKYDFKQIVKIVSKNVADLSSWYFDYIKDPLYCEKEDNEQRIAIQATLYQLLDSYLRILAPIIPHTCEEAYEFFDKKDKQKSVHLEGFTNFKIDSKYKVDFKKWEEFFDLKDKVYSEIEKTRNEKVINSKGQAHITIHSKSLPFDEQTLERYLGVAKVEFKVKEKDGTTIKVKNSKYARCERCWNYYPTNLIANELCERCKKVIGNKKI.

Residues 58–68 (PYANGDLHTGH) carry the 'HIGH' region motif. Glu-550 is a binding site for L-isoleucyl-5'-AMP. A 'KMSKS' region motif is present at residues 591-595 (KMSKS). Position 594 (Lys-594) interacts with ATP. Cys-871, Cys-874, Cys-888, and Cys-891 together coordinate Zn(2+).

It belongs to the class-I aminoacyl-tRNA synthetase family. IleS type 1 subfamily. As to quaternary structure, monomer. Zn(2+) serves as cofactor.

Its subcellular location is the cytoplasm. It carries out the reaction tRNA(Ile) + L-isoleucine + ATP = L-isoleucyl-tRNA(Ile) + AMP + diphosphate. In terms of biological role, catalyzes the attachment of isoleucine to tRNA(Ile). As IleRS can inadvertently accommodate and process structurally similar amino acids such as valine, to avoid such errors it has two additional distinct tRNA(Ile)-dependent editing activities. One activity is designated as 'pretransfer' editing and involves the hydrolysis of activated Val-AMP. The other activity is designated 'posttransfer' editing and involves deacylation of mischarged Val-tRNA(Ile). The chain is Isoleucine--tRNA ligase from Malacoplasma penetrans (strain HF-2) (Mycoplasma penetrans).